A 152-amino-acid polypeptide reads, in one-letter code: Ribosome maturation factor RimP (152 aa).

It belongs to the RimP family.

The protein resides in the cytoplasm. Functionally, required for maturation of 30S ribosomal subunits. This Desulfitobacterium hafniense (strain Y51) protein is Ribosome maturation factor RimP.